The sequence spans 1402 residues: DNA-directed RNA polymerase subunit beta' (1402 aa).

Zn(2+) contacts are provided by C72, C74, C87, and C90. Positions 463, 465, and 467 each coordinate Mg(2+). Positions 811, 885, 892, and 895 each coordinate Zn(2+).

Belongs to the RNA polymerase beta' chain family. As to quaternary structure, the RNAP catalytic core consists of 2 alpha, 1 beta, 1 beta' and 1 omega subunit. When a sigma factor is associated with the core the holoenzyme is formed, which can initiate transcription. Mg(2+) is required as a cofactor. It depends on Zn(2+) as a cofactor.

The catalysed reaction is RNA(n) + a ribonucleoside 5'-triphosphate = RNA(n+1) + diphosphate. Its function is as follows. DNA-dependent RNA polymerase catalyzes the transcription of DNA into RNA using the four ribonucleoside triphosphates as substrates. In Paracoccus denitrificans (strain Pd 1222), this protein is DNA-directed RNA polymerase subunit beta'.